We begin with the raw amino-acid sequence, 583 residues long: Laminarase-resistance protein LRE1 (583 aa).

Polar residues predominate over residues 1–24 (MPNTHTQHVQISEPNPVNTLSTPS). 2 disordered regions span residues 1 to 31 (MPNT…HRHR) and 330 to 380 (LKDN…HMQH). Composition is skewed to basic and acidic residues over residues 332–342 (DNPRYAKDGYP) and 354–366 (LDSD…SGES). S393 and S398 each carry phosphoserine. A disordered region spans residues 457–486 (SCTPDGKEEMNRLKSNDSNEYSKSEGQIRT). Over residues 461–479 (DGKEEMNRLKSNDSNEYSK) the composition is skewed to basic and acidic residues. 2 positions are modified to phosphoserine: S516 and S552.

Post-translationally, phosphorylated by CDC28/CDK1.

Its function is as follows. Overexpression affects chitinase expression, cell separation and budding pattern, and increases trehalose accumulation and heat resistance by inhibiting protein kinase CBK1. Overexpression also suppresses temperature-induced hyperosmosensitivity and sensitivity to cell wall degrading enzymes. Overexpression of both LRE1 and PBN1 confers resistance to laminarinase. The polypeptide is Laminarase-resistance protein LRE1 (LRE1) (Saccharomyces cerevisiae (strain ATCC 204508 / S288c) (Baker's yeast)).